The following is a 276-amino-acid chain: Glucosamine-6-phosphate deaminase 2 (276 aa).

Asp72 functions as the Proton acceptor; for enolization step in the catalytic mechanism. Residues 106-130 adopt a coiled-coil conformation; the sequence is ILDGNATDLQAECDAFEKKIKEAGG. The For ring-opening step role is filled by Asp141. His143 serves as the catalytic Proton acceptor; for ring-opening step. Residue Glu148 is the For ring-opening step of the active site. Thr161 carries the post-translational modification Phosphothreonine.

The protein belongs to the glucosamine/galactosamine-6-phosphate isomerase family. Homohexamer.

The protein localises to the cytoplasm. The enzyme catalyses alpha-D-glucosamine 6-phosphate + H2O = beta-D-fructose 6-phosphate + NH4(+). The protein operates within nucleotide-sugar biosynthesis; UDP-N-acetyl-alpha-D-glucosamine biosynthesis; alpha-D-glucosamine 6-phosphate from D-fructose 6-phosphate: step 1/1. Its activity is regulated as follows. Allosterically activated by N-acetylglucosamine-6-phosphate (GlcNAc6P). Its function is as follows. Catalyzes the reversible conversion of alpha-D-glucosamine 6-phosphate (GlcN-6P) into beta-D-fructose 6-phosphate (Fru-6P) and ammonium ion, a regulatory reaction step in de novo uridine diphosphate-N-acetyl-alpha-D-glucosamine (UDP-GlcNAc) biosynthesis via hexosamine pathway. Deamination is coupled to aldo-keto isomerization mediating the metabolic flux from UDP-GlcNAc toward Fru-6P. At high ammonium level can drive amination and isomerization of Fru-6P toward hexosamines and UDP-GlcNAc synthesis. Has a role in fine tuning the metabolic fluctuations of cytosolic UDP-GlcNAc and their effects on hyaluronan synthesis that occur during tissue remodeling. The protein is Glucosamine-6-phosphate deaminase 2 of Bos taurus (Bovine).